An 878-amino-acid polypeptide reads, in one-letter code: MVASNNMKGLRAFISDLRSLEHDDEEKRVNVELAKIRAKFQSSTLSAYDRKKYVSKLLYIYMLGYPITFGHMEAAKLLSGTKYSEKLIGYLAVALLLNENHELMKLVINSIKKDLLSHDSLQNSLALHTIANIGGRELCETVYYDIYKLLMSASNENIVRQKSALALLHIYRKFPDLINPEWFEPIVMILGDDDLNVSLAVSNFVNLIVIREPKYQKFAYGKAVGKLKNIVFEHGYSSDYLYYSVPCPWLQVNLCRILLACERPSDNPTRATLIRVLDRILSLPNDNSNVQQVNAVNAILFEAIKLAFLVDESHSLYEKCMDRLADMIADKESNIRYLAFETTAYLISCGHSITSLKHYKELILSSLRYKDVSLRKKSLELLYMMCDEENAKLIVADLLQYLPHLDSVTQEDLISKVAIISETFATDYEWYVDVTIQLLRIAGKSADDGVWHQLVHVIVNNEEIQEYATKRLFSLLQSETIHECLVKAGGYVLGEFGHLITDYPDSQPVHQFSTIYRKLNVSSPSTRVLLLTTLIKLANLQPELNDRIAKVFQEYSTIINPEVQQRACEYLQLLKMPRDFLQLVCDEVPPFLDGNRDGVHPKSRPSSKVNLVDTYPQTIPNVSKPSTPIDVPEYDISACLPGFYRLCWKDKGILYQDSQIQIGVRSEYHNSEGAIYLYYENRQSNTLKSLSSTLIRTFSTFHLATTFQDTNLPSGVQLQQKYVMSGVNEIFEPPIIHVSYVTGVIRSIDLQLPVLLSKFMKPTIFDSYDFFNHWGQMGVEREAQLTFGLNSKDRKLDAKRLTKIVSGFHWGICQNVDSIALNIVGAGIIRFGTQNVGCLLRIEPNYEQNLIRLSIRSTNTSIANTLAKEMQEILRNSF.

It belongs to the adaptor complexes large subunit family. Adaptor protein complex 2 (AP-2) is a heterotetramer composed of two large adaptins (alpha-type subunit apl3 and beta-type subunit apl1), a medium chain (mu-type subunit apm4) and a small adaptin (sigma-type subunit aps2).

It localises to the cell membrane. The protein resides in the membrane. It is found in the coated pit. Adaptins are components of the adaptor complexes which link clathrin to receptors in coated vesicles. Clathrin-associated protein complexes are believed to interact with the cytoplasmic tails of membrane proteins, leading to their selection and concentration. Alpha adaptin is a subunit of the plasma membrane adaptor. The polypeptide is AP-2 complex subunit alpha (apl3) (Schizosaccharomyces pombe (strain 972 / ATCC 24843) (Fission yeast)).